Here is a 391-residue protein sequence, read N- to C-terminus: Elongation factor Tu 1 (391 aa).

Residues 10-201 enclose the tr-type G domain; the sequence is KPHVNIGTIG…EVDNYIPTPE (192 aa). A G1 region spans residues 19-26; sequence GHVDHGKT. Residue 19 to 26 coordinates GTP; that stretch reads GHVDHGKT. Mg(2+) is bound at residue threonine 26. Residues 55–59 form a G2 region; it reads GITIS. Residues 76-79 form a G3 region; sequence DCPG. GTP contacts are provided by residues 76 to 80 and 131 to 134; these read DCPGH and NKVD. The interval 131–134 is G4; sequence NKVD. Residues 169–171 are G5; it reads SAL.

Belongs to the TRAFAC class translation factor GTPase superfamily. Classic translation factor GTPase family. EF-Tu/EF-1A subfamily. Monomer.

It localises to the cytoplasm. The enzyme catalyses GTP + H2O = GDP + phosphate + H(+). In terms of biological role, GTP hydrolase that promotes the GTP-dependent binding of aminoacyl-tRNA to the A-site of ribosomes during protein biosynthesis. The chain is Elongation factor Tu 1 from Bartonella quintana (strain Toulouse) (Rochalimaea quintana).